The sequence spans 173 residues: Crossover junction endodeoxyribonuclease RuvC (173 aa).

Active-site residues include aspartate 8, glutamate 67, and aspartate 139. Mg(2+) is bound by residues aspartate 8, glutamate 67, and aspartate 139.

This sequence belongs to the RuvC family. As to quaternary structure, homodimer which binds Holliday junction (HJ) DNA. The HJ becomes 2-fold symmetrical on binding to RuvC with unstacked arms; it has a different conformation from HJ DNA in complex with RuvA. In the full resolvosome a probable DNA-RuvA(4)-RuvB(12)-RuvC(2) complex forms which resolves the HJ. Mg(2+) serves as cofactor.

It is found in the cytoplasm. It carries out the reaction Endonucleolytic cleavage at a junction such as a reciprocal single-stranded crossover between two homologous DNA duplexes (Holliday junction).. The RuvA-RuvB-RuvC complex processes Holliday junction (HJ) DNA during genetic recombination and DNA repair. Endonuclease that resolves HJ intermediates. Cleaves cruciform DNA by making single-stranded nicks across the HJ at symmetrical positions within the homologous arms, yielding a 5'-phosphate and a 3'-hydroxyl group; requires a central core of homology in the junction. The consensus cleavage sequence is 5'-(A/T)TT(C/G)-3'. Cleavage occurs on the 3'-side of the TT dinucleotide at the point of strand exchange. HJ branch migration catalyzed by RuvA-RuvB allows RuvC to scan DNA until it finds its consensus sequence, where it cleaves and resolves the cruciform DNA. The polypeptide is Crossover junction endodeoxyribonuclease RuvC (Shewanella sp. (strain MR-4)).